We begin with the raw amino-acid sequence, 506 residues long: 2,3-bisphosphoglycerate-independent phosphoglycerate mutase (506 aa).

Residues D9 and S59 each coordinate Mn(2+). The Phosphoserine intermediate role is filled by S59. Residues H120, 149–150, R181, R187, 254–257, and K327 contribute to the substrate site; these read RD and RADR. Positions 394, 398, 435, 436, and 452 each coordinate Mn(2+).

It belongs to the BPG-independent phosphoglycerate mutase family. The cofactor is Mn(2+).

The enzyme catalyses (2R)-2-phosphoglycerate = (2R)-3-phosphoglycerate. The protein operates within carbohydrate degradation; glycolysis; pyruvate from D-glyceraldehyde 3-phosphate: step 3/5. In terms of biological role, catalyzes the interconversion of 2-phosphoglycerate and 3-phosphoglycerate. The chain is 2,3-bisphosphoglycerate-independent phosphoglycerate mutase from Natronomonas pharaonis (strain ATCC 35678 / DSM 2160 / CIP 103997 / JCM 8858 / NBRC 14720 / NCIMB 2260 / Gabara) (Halobacterium pharaonis).